The primary structure comprises 288 residues: MKRTPHLLAIQSHVVFGHAGNSAAVFPMQRIGVNVWPLNTVQFSNHTQYKQWTGEVLAPQQIPALIEGIAAIGELGNCDAVLSGYLGSAAQGRAILTGVARIKAANPKALYLCDPVMGHPEKGCIVAPEVSDFLLQEAAAMADFMCPNQLELDSFSGRKPESLADCLAMARALLARGPKAVVVKHLDYPGKAADGFEMLLVTAEASWHLRRPLLAFPRQPVGVGDLTSGLFLSRILLGDDLVAAFEFTAAAVHEVLLETQACGSYELELVRAQDRIAHPRVKFDAVRL.

Substrate-binding positions include Ser12 and 47 to 48; that span reads TQ. Residues Asp114, Glu151, Lys184, and 211-214 contribute to the ATP site; that span reads RPLL. Position 225 (Asp225) interacts with substrate.

It belongs to the pyridoxine kinase family. PdxY subfamily. Homodimer. Requires Mg(2+) as cofactor.

The enzyme catalyses pyridoxal + ATP = pyridoxal 5'-phosphate + ADP + H(+). The protein operates within cofactor metabolism; pyridoxal 5'-phosphate salvage; pyridoxal 5'-phosphate from pyridoxal: step 1/1. In terms of biological role, pyridoxal kinase involved in the salvage pathway of pyridoxal 5'-phosphate (PLP). Catalyzes the phosphorylation of pyridoxal to PLP. This Pseudomonas savastanoi pv. phaseolicola (strain 1448A / Race 6) (Pseudomonas syringae pv. phaseolicola (strain 1448A / Race 6)) protein is Pyridoxal kinase PdxY.